Consider the following 348-residue polypeptide: Chemokine C-C motif receptor-like 2 (348 aa).

The Extracellular portion of the chain corresponds to 1–43 (MANYTPAPEDDYDVFIEDDLSDDEIEPCTPYDPKILSAQLVPY). Residues 44-64 (LYTTVFMVGLLDNILVVFILV) traverse the membrane as a helical segment. At 65-76 (KYKGLRQAENMS) the chain is on the cytoplasmic side. Residues 77–97 (FLNLALSNLGFLLTLPFWAYA) traverse the membrane as a helical segment. The Extracellular portion of the chain corresponds to 98-110 (ASHGEGFDDPLCK). Cys-109 and Cys-187 are disulfide-bonded. Residues 111 to 131 (ILLLLYSIGLYSEAFFNVLLT) traverse the membrane as a helical segment. Residues 132–150 (VQRYKEFFHVRRRFSACRT) lie on the Cytoplasmic side of the membrane. Residues 151 to 171 (VAGSIFISVLVWVTATLVTLP) form a helical membrane-spanning segment. Topologically, residues 172-204 (ELVSYKPQMQSQKYKCFFTGLHFLPADETFWKH) are extracellular. The helical transmembrane segment at 205–225 (FLTLKMNILGFLLPLFAFVYC) threads the bilayer. Residues 226 to 244 (YVRMRKTLQFRERNYGLFK) lie on the Cytoplasmic side of the membrane. Residues 245 to 265 (LVFTIMAVFLLMWGPYNIVLF) form a helical membrane-spanning segment. Topologically, residues 266 to 292 (LSAFNEHFSLHGCGSSYNLNKSVQITR) are extracellular. Asn-285 carries N-linked (GlcNAc...) asparagine glycosylation. The helical transmembrane segment at 293 to 313 (IIAATHCCVNPLLYVFLDKAF) threads the bilayer. The Cytoplasmic segment spans residues 314–348 (RKHLCHLFYLCSDTAPQPTEEPAQGASGEEYHLSS).

This sequence belongs to the G-protein coupled receptor 1 family.

Its subcellular location is the cell membrane. In terms of biological role, receptor for CCL19 and chemerin/RARRES2. Does not appear to be a signaling receptor, but may have a role in modulating chemokine-triggered immune responses by capturing and internalizing CCL19 or by presenting RARRES2 ligand to CMKLR1, a functional signaling receptor. Plays a critical role for the development of Th2 responses. The protein is Chemokine C-C motif receptor-like 2 (CCRL2) of Bos taurus (Bovine).